The following is a 327-amino-acid chain: 4-diphosphocytidyl-2-C-methyl-D-erythritol kinase (327 aa).

The active site involves lysine 14. 97 to 107 (PDGAGLGGGSA) provides a ligand contact to ATP. Aspartate 140 is an active-site residue.

The protein belongs to the GHMP kinase family. IspE subfamily.

The catalysed reaction is 4-CDP-2-C-methyl-D-erythritol + ATP = 4-CDP-2-C-methyl-D-erythritol 2-phosphate + ADP + H(+). The protein operates within isoprenoid biosynthesis; isopentenyl diphosphate biosynthesis via DXP pathway; isopentenyl diphosphate from 1-deoxy-D-xylulose 5-phosphate: step 3/6. Functionally, catalyzes the phosphorylation of the position 2 hydroxy group of 4-diphosphocytidyl-2C-methyl-D-erythritol. The protein is 4-diphosphocytidyl-2-C-methyl-D-erythritol kinase of Oleidesulfovibrio alaskensis (strain ATCC BAA-1058 / DSM 17464 / G20) (Desulfovibrio alaskensis).